A 274-amino-acid chain; its full sequence is NH(3)-dependent NAD(+) synthetase (274 aa).

Residue 46–53 (GISGGQDS) participates in ATP binding. D52 contributes to the Mg(2+) binding site. R140 contacts deamido-NAD(+). T160 lines the ATP pocket. E165 is a binding site for Mg(2+). Deamido-NAD(+)-binding residues include K173 and D180. 2 residues coordinate ATP: K189 and T211. Deamido-NAD(+) is bound at residue 260 to 261 (HK).

The protein belongs to the NAD synthetase family. In terms of assembly, homodimer.

The catalysed reaction is deamido-NAD(+) + NH4(+) + ATP = AMP + diphosphate + NAD(+) + H(+). Its pathway is cofactor biosynthesis; NAD(+) biosynthesis; NAD(+) from deamido-NAD(+) (ammonia route): step 1/1. Catalyzes the ATP-dependent amidation of deamido-NAD to form NAD. Uses ammonia as a nitrogen source. In Pectobacterium carotovorum subsp. carotovorum (strain PC1), this protein is NH(3)-dependent NAD(+) synthetase.